A 206-amino-acid chain; its full sequence is MTNILIVTSSPRGPEGLSTRFATEIAEGLKTALGGTLSRRDLAANPPPHIAQAYIGGRVVGPETRTPEQAKAVGLAQELVDEVTAADVIVLGSGMINFGPSSQLKAWFDHITWPGVTFGYSAAGKPQGLLTGKKVYLVTASGGVFSEGDWAAFDFQTGYLRHLLSFIGLTDIQIIRVEGTVFGPEAAKAAIAATEAQVRAVLEKAA.

Ser10 lines the FMN pocket.

Belongs to the azoreductase type 1 family. As to quaternary structure, homodimer. It depends on FMN as a cofactor.

It catalyses the reaction 2 a quinone + NADH + H(+) = 2 a 1,4-benzosemiquinone + NAD(+). The catalysed reaction is N,N-dimethyl-1,4-phenylenediamine + anthranilate + 2 NAD(+) = 2-(4-dimethylaminophenyl)diazenylbenzoate + 2 NADH + 2 H(+). Its function is as follows. Quinone reductase that provides resistance to thiol-specific stress caused by electrophilic quinones. In terms of biological role, also exhibits azoreductase activity. Catalyzes the reductive cleavage of the azo bond in aromatic azo compounds to the corresponding amines. This Rhizobium etli (strain ATCC 51251 / DSM 11541 / JCM 21823 / NBRC 15573 / CFN 42) protein is FMN-dependent NADH:quinone oxidoreductase 2.